A 100-amino-acid polypeptide reads, in one-letter code: Urease subunit gamma (100 aa).

This sequence belongs to the urease gamma subunit family. As to quaternary structure, heterotrimer of UreA (gamma), UreB (beta) and UreC (alpha) subunits. Three heterotrimers associate to form the active enzyme.

The protein resides in the cytoplasm. It catalyses the reaction urea + 2 H2O + H(+) = hydrogencarbonate + 2 NH4(+). Its pathway is nitrogen metabolism; urea degradation; CO(2) and NH(3) from urea (urease route): step 1/1. Its function is as follows. Ureolysis may allow urea to be employed as a nitrogen source for growth and produces ammonia which may protect from killing at low pH. This chain is Urease subunit gamma, found in Streptococcus salivarius (strain 57.I).